The following is a 286-amino-acid chain: ATP synthase gamma chain (286 aa).

This sequence belongs to the ATPase gamma chain family. F-type ATPases have 2 components, CF(1) - the catalytic core - and CF(0) - the membrane proton channel. CF(1) has five subunits: alpha(3), beta(3), gamma(1), delta(1), epsilon(1). CF(0) has three main subunits: a, b and c.

The protein resides in the cell inner membrane. Produces ATP from ADP in the presence of a proton gradient across the membrane. The gamma chain is believed to be important in regulating ATPase activity and the flow of protons through the CF(0) complex. In Pseudoalteromonas translucida (strain TAC 125), this protein is ATP synthase gamma chain.